A 410-amino-acid chain; its full sequence is Lipoyl synthase, mitochondrial (410 aa).

Residues Cys-125, Cys-130, Cys-136, Cys-157, Cys-161, Cys-164, and Ser-373 each contribute to the [4Fe-4S] cluster site. The 223-residue stretch at 140 to 362 (SDEEGTATAT…EKEAMDMGFL (223 aa)) folds into the Radical SAM core domain.

Belongs to the radical SAM superfamily. Lipoyl synthase family. [4Fe-4S] cluster is required as a cofactor.

It is found in the mitochondrion. The enzyme catalyses [[Fe-S] cluster scaffold protein carrying a second [4Fe-4S](2+) cluster] + N(6)-octanoyl-L-lysyl-[protein] + 2 oxidized [2Fe-2S]-[ferredoxin] + 2 S-adenosyl-L-methionine + 4 H(+) = [[Fe-S] cluster scaffold protein] + N(6)-[(R)-dihydrolipoyl]-L-lysyl-[protein] + 4 Fe(3+) + 2 hydrogen sulfide + 2 5'-deoxyadenosine + 2 L-methionine + 2 reduced [2Fe-2S]-[ferredoxin]. The protein operates within protein modification; protein lipoylation via endogenous pathway; protein N(6)-(lipoyl)lysine from octanoyl-[acyl-carrier-protein]: step 2/2. Its function is as follows. Catalyzes the radical-mediated insertion of two sulfur atoms into the C-6 and C-8 positions of the octanoyl moiety bound to the lipoyl domains of lipoate-dependent enzymes, thereby converting the octanoylated domains into lipoylated derivatives. The sequence is that of Lipoyl synthase, mitochondrial from Leishmania major.